Consider the following 88-residue polypeptide: Alpha-conotoxin GVIIIB (88 aa).

Residues 1-20 (MMSKMGAMFVLLLLFTLASS) form the signal peptide. Positions 21 to 43 (QQEGDVQARKTRPKSDFYRALPR) are excised as a propeptide. Thr-87 is subject to Threonine amide.

This sequence belongs to the conotoxin S superfamily. Post-translationally, contains 5 disulfide bonds. The predominant peptide contains 2 hydroxyprolines, while 2 minor peptides contains 1 and 3 hydroxyprolines. In terms of tissue distribution, expressed by the venom duct.

It is found in the secreted. Alpha-conotoxins act on postsynaptic membranes, they bind to the nicotinic acetylcholine receptors (nAChR) and thus inhibit them. This toxin shows high activity on alpha-9-alpha-10 (CHRNA9-CHRNA10) (IC(50)=9.79 nM). It also shows weak activity on alpha-3-beta-2 (CHRNA3-CHRNB2) (IC(50)~1 uM), alpha-6/alpha-3-beta-2-beta-3 (CHRNA6/CHRNA3-CHRNB2-CHRNB3) (IC(50)~1 uM). The toxin binds to the same or overlapping binding sites than conotoxin RgIA (AC P0C1D0). In Conus geographus (Geography cone), this protein is Alpha-conotoxin GVIIIB.